The sequence spans 760 residues: MKLNVDGLLVYFPYDYIYPEQFSYMRELKRTLDAKGHGVLEMPSGTGKTVSLLALIMAYQRAYPLEVTKLIYCSRTVPEIEKVIEELRKLLNFYEKQEGEKLPFLGLALSSRKNLCIHPEVTPLRFGKDVDGKCHSLTASYVRAQYQHDTSLPHCRFYEEFDAHGREVPLPAGIYNLDDLKALGRRQGWCPYFLARYSILHANVVVYSYHYLLDPKIADLVSKELARKAVVVFDEAHNIDNVCIDSMSVNLTRRTLDRCQGNLETLQKTVLRIKETDEQRLRDEYRRLVEGLREASAARETDAHLANPVLPDEVLQEAVPGSIRTAEHFLGFLRRLLEYVKWRLRVQHVVQESPPAFLSGLAQRVCIQRKPLRFCAERLRSLLHTLEITDLADFSPLTLLANFATLVSTYAKGFTIIIEPFDDRTPTIANPILHFSCMDASLAIKPVFERFQSVIITSGTLSPLDIYPKILDFHPVTMATFTMTLARVCLCPMIIGRGNDQVAISSKFETREDIAVIRNYGNLLLEMSAVVPDGIVAFFTSYQYMESTVASWYEQGILENIQRNKLLFIETQDGAETSVALEKYQEACENGRGAILLSVARGKVSEGIDFVHHYGRAVIMFGVPYVYTQSRILKARLEYLRDQFQIRENDFLTFDAMRHAAQCVGRAIRGKTDYGLMVFADKRFARGDKRGKLPRWIQEHLTDANLNLTVDEGVQVAKYFLRQMAQPFHREDQLGLSLLSLEQLESEETLKRIEQIAQQL.

The Helicase ATP-binding domain occupies 7–283 (GLLVYFPYDY…KETDEQRLRD (277 aa)). Residue 42-49 (MPSGTGKT) coordinates ATP. [4Fe-4S] cluster-binding residues include Cys-116, Cys-134, Cys-155, and Cys-190. The DEAH box motif lies at 234–237 (DEAH). A mediates interaction with MMS19 region spans residues 438 to 637 (MDASLAIKPV…TQSRILKARL (200 aa)). The Nuclear localization signal signature appears at 682-695 (KRFARGDKRGKLPR).

It belongs to the helicase family. RAD3/XPD subfamily. In terms of assembly, component of the 7-subunit TFIIH core complex composed of XPB/ERCC3, XPD/ERCC2, GTF2H1, GTF2H2, GTF2H3, GTF2H4 and GTF2H5, which is active in NER. The core complex associates with the 3-subunit CDK-activating kinase (CAK) module composed of CCNH/cyclin H, CDK7 and MNAT1 to form the 10-subunit holoenzyme (holo-TFIIH) active in transcription. Interacts with GTF2H2 (p44) which stimulates the 5'-3' helicase activity of this subunit. Component of the MMXD complex, which includes CIAO1, ERCC2, CIAO2B, MMS19 and SLC25A5. Interacts with CIAO1 and CIAO2B; the interaction WITH CIAO2B is direct. Interacts with ATF7IP. Interacts directly with MMS19. Part of TBP-based Pol II pre-initiation complex (PIC), in which Pol II core assembles with general transcription factors and other specific initiation factors including GTF2E1, GTF2E2, GTF2F1, GTF2F2, TCEA1, ERCC2, ERCC3, GTF2H2, GTF2H3, GTF2H4, GTF2H5, GTF2A1, GTF2A2, GTF2B and TBP; this large multi-subunit PIC complex mediates DNA unwinding and targets Pol II core to the transcription start site where the first phosphodiester bond forms. As to quaternary structure, (Microbial infection) Interacts with Epstein-Barr virus EBNA2. Mg(2+) serves as cofactor. [4Fe-4S] cluster is required as a cofactor. Post-translationally, ISGylated.

It is found in the nucleus. It localises to the cytoplasm. The protein localises to the cytoskeleton. The protein resides in the spindle. It carries out the reaction Couples ATP hydrolysis with the unwinding of duplex DNA at the replication fork by translocating in the 5'-3' direction. This creates two antiparallel DNA single strands (ssDNA). The leading ssDNA polymer is the template for DNA polymerase III holoenzyme which synthesizes a continuous strand.. The catalysed reaction is ATP + H2O = ADP + phosphate + H(+). With respect to regulation, interaction with GTF2H2 (p44) results in stimulation of the 5'-3' helicase activity of this subunit. DNA unwinding by this subunit in TFIIH is stimulated 4-fold by XPA and 20-fold by ERCC5/XPG. In terms of biological role, ATP-dependent 5'-3' DNA helicase. Component of the general transcription and DNA repair factor IIH (TFIIH) core complex, not absolutely essential for minimal transcription in vitro. Required for transcription-coupled nucleotide excision repair (NER) of damaged DNA; recognizes damaged bases. Sequestered in chromatin on UV-damaged DNA. When complexed to CDK-activating kinase (CAK), involved in transcription by RNA polymerase II. In NER, TFIIH acts by opening DNA around the lesion to allow the excision of the damaged oligonucleotide and its replacement by a new DNA fragment. The ATP-dependent helicase activity of XPD/ERCC2 is required for DNA opening. Involved in DNA lesion verification. In transcription, TFIIH has an essential role in transcription initiation. When the pre-initiation complex (PIC) has been established, TFIIH is required for promoter opening and promoter escape. Phosphorylation of the C-terminal tail (CTD) of the largest subunit of RNA polymerase II by the kinase module CAK controls the initiation of transcription. XPD/ERCC2 acts by forming a bridge between CAK and the core-TFIIH complex. The structure of the TFIIH transcription complex differs from the NER-TFIIH complex; large movements by XPD/ERCC2 and XPB/ERCC3 are stabilized by XPA which allow this subunit to contact ssDNA. Involved in the regulation of vitamin-D receptor activity. As part of the mitotic spindle-associated MMXD complex it plays a role in chromosome segregation. Might have a role in aging process and could play a causative role in the generation of skin cancers. The polypeptide is General transcription and DNA repair factor IIH helicase subunit XPD (ERCC2) (Homo sapiens (Human)).